The primary structure comprises 542 residues: CTP synthase (542 aa).

Positions 1–265 are amidoligase domain; the sequence is MTRYVFITGG…DREILAHFQM (265 aa). S13 is a binding site for CTP. S13 provides a ligand contact to UTP. Residues 14–19 and D71 contribute to the ATP site; that span reads SLGKGL. Residues D71 and E139 each coordinate Mg(2+). Residues 146–148, 186–191, and K222 contribute to the CTP site; these read DIE and KTKPTQ. Residues 186–191 and K222 contribute to the UTP site; that span reads KTKPTQ. 238–240 contributes to the ATP binding site; that stretch reads RDV. A Glutamine amidotransferase type-1 domain is found at 291–541; that stretch reads TIAIVGKYTG…IAAAIEQSRL (251 aa). G353 contacts L-glutamine. The active-site Nucleophile; for glutamine hydrolysis is C380. L-glutamine-binding positions include 381-384, E404, and R469; that span reads FGMQ. Catalysis depends on residues H514 and E516.

It belongs to the CTP synthase family. In terms of assembly, homotetramer.

The enzyme catalyses UTP + L-glutamine + ATP + H2O = CTP + L-glutamate + ADP + phosphate + 2 H(+). The catalysed reaction is L-glutamine + H2O = L-glutamate + NH4(+). It carries out the reaction UTP + NH4(+) + ATP = CTP + ADP + phosphate + 2 H(+). It functions in the pathway pyrimidine metabolism; CTP biosynthesis via de novo pathway; CTP from UDP: step 2/2. Its activity is regulated as follows. Allosterically activated by GTP, when glutamine is the substrate; GTP has no effect on the reaction when ammonia is the substrate. The allosteric effector GTP functions by stabilizing the protein conformation that binds the tetrahedral intermediate(s) formed during glutamine hydrolysis. Inhibited by the product CTP, via allosteric rather than competitive inhibition. Functionally, catalyzes the ATP-dependent amination of UTP to CTP with either L-glutamine or ammonia as the source of nitrogen. Regulates intracellular CTP levels through interactions with the four ribonucleotide triphosphates. The sequence is that of CTP synthase from Methylorubrum populi (strain ATCC BAA-705 / NCIMB 13946 / BJ001) (Methylobacterium populi).